The chain runs to 369 residues: Galactose-1-phosphate uridylyltransferase (369 aa).

Zn(2+) is bound by residues Cys-54 and Cys-57. UDP-alpha-D-glucose is bound by residues Ala-63 and 79–80; that span reads ND. Residue His-127 coordinates Zn(2+). Asn-172 provides a ligand contact to UDP-alpha-D-glucose. Position 183 (His-183) interacts with Zn(2+). The Tele-UMP-histidine intermediate role is filled by His-185. Position 187 (Gln-187) interacts with UDP-alpha-D-glucose. Residues Glu-201, His-300, His-317, and His-319 each contribute to the Fe cation site. UDP-alpha-D-glucose is bound by residues 332–335 and 337–338; these read KFCV and FE.

The protein belongs to the galactose-1-phosphate uridylyltransferase type 1 family. Homodimer. Zn(2+) is required as a cofactor.

The enzyme catalyses alpha-D-galactose 1-phosphate + UDP-alpha-D-glucose = alpha-D-glucose 1-phosphate + UDP-alpha-D-galactose. Its pathway is carbohydrate metabolism; galactose metabolism. The chain is Galactose-1-phosphate uridylyltransferase (gal7) from Schizosaccharomyces pombe (strain 972 / ATCC 24843) (Fission yeast).